A 130-amino-acid polypeptide reads, in one-letter code: UPF0251 protein Swol_2090 (130 aa).

The protein belongs to the UPF0251 family.

This Syntrophomonas wolfei subsp. wolfei (strain DSM 2245B / Goettingen) protein is UPF0251 protein Swol_2090.